A 272-amino-acid chain; its full sequence is Large ribosomal subunit protein uL2 (272 aa).

The segment at 247 to 272 (PWGQPCKGFKTRNNKRTNSSIIKRRK) is disordered. Over residues 262–272 (RTNSSIIKRRK) the composition is skewed to polar residues.

It belongs to the universal ribosomal protein uL2 family. In terms of assembly, part of the 50S ribosomal subunit. Forms a bridge to the 30S subunit in the 70S ribosome.

One of the primary rRNA binding proteins. Required for association of the 30S and 50S subunits to form the 70S ribosome, for tRNA binding and peptide bond formation. It has been suggested to have peptidyltransferase activity; this is somewhat controversial. Makes several contacts with the 16S rRNA in the 70S ribosome. This Bdellovibrio bacteriovorus (strain ATCC 15356 / DSM 50701 / NCIMB 9529 / HD100) protein is Large ribosomal subunit protein uL2.